We begin with the raw amino-acid sequence, 265 residues long: MKAAVLIWLFLMGSQARHFWQQDEPPQSPWDRVKDLATVYVDSVKDSGRDYVSQFETSTLGKQLNLKLLDNWDSLTSTVNKLREQLGPVTQEFWDNLEKETEELRQEMSKDLEEVKAQVQPYLDNFQKNWQEEMNLYSQKLEPLRTELQEGALQKLQDLQEKLSPLAEQVRDRARAHVNTLRTQLAPYSDELRQRLATRLEALKENSGASLAEYHAKASEHLSALGEKAKPALDDLRQGLLPVLESFKVSFLSALEEYTKKLSSQ.

An N-terminal signal peptide occupies residues 1 to 16; sequence MKAAVLIWLFLMGSQA. Tandem repeats lie at residues 66 to 87 and 88 to 109. The segment at 66-265 is 10 X approximate tandem repeats; sequence LKLLDNWDSL…EEYTKKLSSQ (200 aa). Residue M108 is modified to Methionine sulfoxide. Residues 110–120 form a 3; half-length repeat; sequence KDLEEVKAQVQ. Tandem repeats lie at residues 121–142, 143–164, 165–186, 187–208, and 209–230. A Methionine sulfoxide modification is found at M134. The stretch at 231-241 is one 9; half-length repeat; that stretch reads PALDDLRQGLL. Copy 10 of the repeat occupies 242–265; that stretch reads PVLESFKVSFLSALEEYTKKLSSQ.

The protein belongs to the apolipoprotein A1/A4/E family. As to quaternary structure, homodimer. Interacts with APOA1BP and CLU. Component of a sperm activating protein complex (SPAP), consisting of APOA1, an immunoglobulin heavy chain, an immunoglobulin light chain and albumin. Interacts with NDRG1. Interacts with SCGB3A2. Interacts with NAXE and YJEFN3. Post-translationally, glycosylated. In terms of processing, palmitoylated. Phosphorylation sites are present in the extracellular medium.

The protein localises to the secreted. Functionally, participates in the reverse transport of cholesterol from tissues to the liver for excretion by promoting cholesterol efflux from tissues and by acting as a cofactor for the lecithin cholesterol acyltransferase (LCAT). As part of the SPAP complex, activates spermatozoa motility. The sequence is that of Apolipoprotein A-I (APOA1) from Aotus nancymaae (Ma's night monkey).